We begin with the raw amino-acid sequence, 479 residues long: MIQVLLVTICLAAFPYQGSSIILESGKVNDYEVVYPQRLAPLPEGAVQQKYEDTMQYEFKVNGEPVVLHLEKNKGLFSKDYSEIHYSPDGRRITTHPLVEDHCYYRGHIRNDADSTASISACHGLKGHFKLRGETYLIEPMKISNSEAHAVYKYENVEKEDEAHKMCGVTQNWESYEPIKKASQLIVSTEQQRYMEIVIVVDHSMVKKYNGDSDKIKAWVYEMINTITESYRYLYIDIILSGLEIWSEKDLINVETSAENTLKSFGEWRAKDLIHRISHDNAQLLTATDLDGPTIGLAYVASMCDPKRSVGIVQDHSSVNRLVAITLAHEMAHNLGVRHDEGSCSCGSGYTCIMSPVINPDAMKYFSDCSYIQCWDYIMKENPPCILNKPLRTDTVSTPVSGNELLEAGKDYDRDSSANPCYDAATCKLNQGAQCTAGPCCDQGRFKEEGTICRRARGDDLDDYCNGISADCPRNPYHA.

The signal sequence occupies residues 1-20 (MIQVLLVTICLAAFPYQGSS). The propeptide occupies 21–187 (IILESGKVND…PIKKASQLIV (167 aa)). The 198-residue stretch at 193–390 (RYMEIVIVVD…ENPPCILNKP (198 aa)) folds into the Peptidase M12B domain. Residues E196 and D280 each contribute to the Ca(2+) site. Cystine bridges form between C304–C385, C344–C369, and C346–C352. Position 329 (H329) interacts with Zn(2+). E330 is an active-site residue. 2 residues coordinate Zn(2+): H333 and H339. Residues C385 and N388 each contribute to the Ca(2+) site. The propeptide occupies 390–414 (PLRTDTVSTPVSGNELLEAGKDYDR). Residues 398–479 (TPVSGNELLE…ADCPRNPYHA (82 aa)) enclose the Disintegrin domain. Intrachain disulfides connect C435/C441, C440/C465, and C453/C472. The short motif at 457 to 459 (RGD) is the Cell attachment site element.

It belongs to the venom metalloproteinase (M12B) family. P-II subfamily. P-IIa sub-subfamily. In terms of assembly, monomer. It depends on Zn(2+) as a cofactor. As to expression, expressed by the venom gland.

Its subcellular location is the secreted. Its function is as follows. Snake venom metalloproteinase that impairs hemostasis in the envenomed animal. Functionally, inhibits platelet aggregation induced by ADP, thrombin, platelet-activating factor and collagen. Acts by inhibiting fibrinogen interaction with platelet receptors GPIIb/GPIIIa (ITGA2B/ITGB3). In Deinagkistrodon acutus (Hundred-pace snake), this protein is Zinc metalloproteinase/disintegrin.